A 498-amino-acid chain; its full sequence is Lipase 3 (498 aa).

Cysteine 60 and cysteine 91 are oxidised to a cystine. Asparagine 193 is a glycosylation site (N-linked (GlcNAc...) asparagine). The active-site Acyl-ester intermediate is serine 200. N-linked (GlcNAc...) asparagine glycosylation occurs at asparagine 384. Residue histidine 409 is the Charge relay system of the active site. The N-linked (GlcNAc...) asparagine glycan is linked to asparagine 418.

This sequence belongs to the type-B carboxylesterase/lipase family.

It catalyses the reaction a triacylglycerol + H2O = a diacylglycerol + a fatty acid + H(+). In Yarrowia lipolytica (strain CLIB 122 / E 150) (Yeast), this protein is Lipase 3 (LIP3).